The following is a 189-amino-acid chain: Casparian strip membrane protein 2 (189 aa).

The segment at 1–21 (MKVSTIESGEISKGASSPRKG) is disordered. Over 1–25 (MKVSTIESGEISKGASSPRKGMKRG) the chain is Cytoplasmic. A helical membrane pass occupies residues 26–46 (LSIMDFILRIFAAMSTLGSAL). Over 47–73 (SMGTAKQTMPFATRFVRFKVSFHDLPT) the chain is Extracellular. A helical transmembrane segment spans residues 74-94 (FLFFVTANSIVCGYLALSLVL). Over 95-108 (SFFHIVRTISVKSR) the chain is Cytoplasmic. Residues 109–129 (ILLVFLDTVMFGLLTSGASAA) traverse the membrane as a helical segment. The Extracellular segment spans residues 130–163 (AAIVYVAHYGNPSANWFPFCQQYNSFCGRISGSL). A helical transmembrane segment spans residues 164–184 (VGSFIAVVIFMILILMSGISI). Over 185–189 (SKSKH) the chain is Cytoplasmic.

Belongs to the Casparian strip membrane proteins (CASP) family. As to quaternary structure, homodimer and heterodimers.

The protein localises to the cell membrane. In terms of biological role, regulates membrane-cell wall junctions and localized cell wall deposition. Required for establishment of the Casparian strip membrane domain (CSD) and the subsequent formation of Casparian strips, a cell wall modification of the root endodermis that determines an apoplastic barrier between the intraorganismal apoplasm and the extraorganismal apoplasm and prevents lateral diffusion. The chain is Casparian strip membrane protein 2 from Medicago truncatula (Barrel medic).